The following is a 248-amino-acid chain: Inner membrane protein pE248R (248 aa).

Residue Gly2 is the site of N-myristoyl glycine; by host attachment. At 2-199 (GGSTSKNSFK…ADAISAVFKN (198 aa)) the chain is on the cytoplasmic side. The chain crosses the membrane as a helical span at residues 200–220 (IMVAAVVIVLIIVGFIAVFYF). Topologically, residues 221–248 (LHSRHRHEEEEEAEPLISNKVLKNAAVS) are extracellular.

This sequence belongs to the asfivirus E248R family. Interacts with A151R.

It localises to the host membrane. Its subcellular location is the virion membrane. In terms of biological role, essential for viral fusion with host endosomal membrane and core release. The sequence is that of Inner membrane protein pE248R from Ornithodoros (relapsing fever ticks).